A 122-amino-acid chain; its full sequence is Large ribosomal subunit protein uL14 (122 aa).

The protein belongs to the universal ribosomal protein uL14 family. As to quaternary structure, part of the 50S ribosomal subunit. Forms a cluster with proteins L3 and L19. In the 70S ribosome, L14 and L19 interact and together make contacts with the 16S rRNA in bridges B5 and B8.

In terms of biological role, binds to 23S rRNA. Forms part of two intersubunit bridges in the 70S ribosome. This is Large ribosomal subunit protein uL14 from Rhodococcus erythropolis (strain PR4 / NBRC 100887).